The chain runs to 107 residues: Multidrug resistance protein mmr (107 aa).

4 helical membrane passes run 2–19 (IYLY…ATSL), 29–51 (LWPT…LSIS), 58–80 (VAYA…LFLG), and 84–106 (SVMK…LAGA).

The protein belongs to the drug/metabolite transporter (DMT) superfamily. Small multidrug resistance (SMR) (TC 2.A.7.1) family. Mmr subfamily.

It localises to the cell membrane. Its function is as follows. Multidrug efflux pump. Confers resistance to tetraphenylphosphonium (TPP), erythromycin, ethidium bromide, acriflavine, safranin O and pyronin Y. This Mycobacterium bovis (strain ATCC BAA-935 / AF2122/97) protein is Multidrug resistance protein mmr (mmr).